Consider the following 723-residue polypeptide: 1,3-beta-galactosyl-N-acetylhexosamine phosphorylase Cphy0577 (723 aa).

Asp-317 functions as the Proton donor in the catalytic mechanism.

The protein belongs to the glycoside hydrolase 112 family.

It carries out the reaction beta-D-galactosyl-(1-&gt;3)-N-acetyl-D-glucosamine + phosphate = alpha-D-galactose 1-phosphate + N-acetyl-D-glucosamine. Its function is as follows. Reversibly phosphorolyzes beta-D-galactopyranosyl-(1-&gt;3)-N-acetyl-D-glucosamine to form alpha-D-galactopyranose 1-phosphate and acetyl-D-glucosamine. Active towards galacto-N-biose and lacto-N-biose. Does not phosphorolyze galacto-N-tetraose or lacto-N-tetraose. In the reverse reaction has activity toward N-acetyl-D-glucosamine and N-acetyl-D-galactosamine, but not L-rhamnose, D-glucose or D-galactose. The protein is 1,3-beta-galactosyl-N-acetylhexosamine phosphorylase Cphy0577 of Lachnoclostridium phytofermentans (strain ATCC 700394 / DSM 18823 / ISDg) (Clostridium phytofermentans).